Consider the following 95-residue polypeptide: Histone-like DNA-binding protein (95 aa).

This sequence belongs to the bacterial histone-like protein family.

In Rickettsia felis (strain ATCC VR-1525 / URRWXCal2) (Rickettsia azadi), this protein is Histone-like DNA-binding protein.